A 191-amino-acid polypeptide reads, in one-letter code: CASP-like protein 2U3 (191 aa).

The Cytoplasmic portion of the chain corresponds to 1–25; that stretch reads MGAYDGAEAPRAAPASTAANSRPSR. Residues 26-46 traverse the membrane as a helical segment; the sequence is LLLLHSLLLRLVAVVVSILVI. At 47–68 the chain is on the extracellular side; the sequence is AVMVHAKQRVMIFKAEWDNSKA. The chain crosses the membrane as a helical span at residues 69–89; sequence FVALVAISAICLGYSFLQFIL. At 90–114 the chain is on the cytoplasmic side; sequence SAFHLCSKSWKSPTKCWAWMNFIAD. The chain crosses the membrane as a helical span at residues 115 to 135; sequence QILTYAMLGAAAAAAELAYIA. Residues 136–157 are Extracellular-facing; the sequence is KNGSSRAQWQPICSTFNTFCTR. Asn137 carries N-linked (GlcNAc...) asparagine glycosylation. The chain crosses the membrane as a helical span at residues 158–178; it reads AGASIILSFIAVLALANSSAI. The Cytoplasmic segment spans residues 179–191; it reads SAYHLFRRPSSSV.

Belongs to the Casparian strip membrane proteins (CASP) family. Homodimer and heterodimers.

The protein resides in the cell membrane. This Selaginella moellendorffii (Spikemoss) protein is CASP-like protein 2U3.